A 113-amino-acid polypeptide reads, in one-letter code: UPF0342 protein SEQ_0993 (113 aa).

This sequence belongs to the UPF0342 family.

This chain is UPF0342 protein SEQ_0993, found in Streptococcus equi subsp. equi (strain 4047).